The sequence spans 189 residues: MLMLLRRRCRAWLEIRRLDKELAQSSGLPLELPQIVPNAWNEVVWRLPVPNHPDAFMTASNAAQSDFIVYVNGLAFYRAWLALGVEDSQACPLKQDMPKDRKYPSSAAHFAVGIDSPVPLADVSPTMILGHFAVCFTDGMTRSMWLLAHEVAVFPVLSRDEASAVMLAEHVGVAAPIQVSKLREQCRKI.

Suppression of A.tumefaciens oncogenicity. The protein is Protein osa (osa) of Shigella flexneri.